The sequence spans 110 residues: Cytochrome c oxidase subunit 4B (110 aa).

A run of 3 helical transmembrane segments spans residues Tyr27–Ala47, Gly50–Phe70, and Leu88–Ile108.

It belongs to the cytochrome c oxidase bacterial subunit 4 family.

The protein resides in the cell membrane. It carries out the reaction 4 Fe(II)-[cytochrome c] + O2 + 8 H(+)(in) = 4 Fe(III)-[cytochrome c] + 2 H2O + 4 H(+)(out). This Bacillus subtilis (strain 168) protein is Cytochrome c oxidase subunit 4B (ctaF).